A 217-amino-acid polypeptide reads, in one-letter code: Glyoxalase ElbB (217 aa).

Residue Cys-135 is the Nucleophile of the active site.

This sequence belongs to the peptidase C56 family. As to quaternary structure, homodimer.

It carries out the reaction glyoxal + H2O = glycolate + H(+). Displays glyoxalase activity, catalyzing the conversion of glyoxal to glycolate. However, this apparent glyoxalase activity may reflect a protein deglycase activity, which could be the primary function of this protein like other DJ-1 superfamily members such as PARK7, YajL, YhbO and HchA. Is not able to use methylglyoxal as substrate. The sequence is that of Glyoxalase ElbB from Escherichia coli (strain K12).